A 355-amino-acid polypeptide reads, in one-letter code: Dihydroorotate dehydrogenase (quinone) (355 aa).

FMN-binding positions include 68–72 and T92; that span reads AGFDK. Residue K72 participates in substrate binding. 117-121 contributes to the substrate binding site; the sequence is NRMGF. FMN contacts are provided by N154 and N190. N190 is a binding site for substrate. S193 functions as the Nucleophile in the catalytic mechanism. N195 is a substrate binding site. FMN contacts are provided by K232 and T260. A substrate-binding site is contributed by 261-262; it reads NT. Residues G286, G315, and 336 to 337 contribute to the FMN site; that span reads YS.

This sequence belongs to the dihydroorotate dehydrogenase family. Type 2 subfamily. In terms of assembly, monomer. The cofactor is FMN.

It is found in the cell membrane. The enzyme catalyses (S)-dihydroorotate + a quinone = orotate + a quinol. It participates in pyrimidine metabolism; UMP biosynthesis via de novo pathway; orotate from (S)-dihydroorotate (quinone route): step 1/1. Functionally, catalyzes the conversion of dihydroorotate to orotate with quinone as electron acceptor. In Nocardioides sp. (strain ATCC BAA-499 / JS614), this protein is Dihydroorotate dehydrogenase (quinone).